A 180-amino-acid polypeptide reads, in one-letter code: DNA-directed RNA polymerase subunit Rpo7 (180 aa).

The 84-residue stretch at 82-165 (QEVVEGEVLQ…RLPRIALTMR (84 aa)) folds into the S1 motif domain.

The protein belongs to the eukaryotic RPB7/RPC8 RNA polymerase subunit family. In terms of assembly, part of the 13-subunit RNA polymerase complex. Forms a stalk with Rpo4 that extends from the main structure.

Its subcellular location is the cytoplasm. The catalysed reaction is RNA(n) + a ribonucleoside 5'-triphosphate = RNA(n+1) + diphosphate. In terms of biological role, DNA-dependent RNA polymerase (RNAP) catalyzes the transcription of DNA into RNA using the four ribonucleoside triphosphates as substrates. This is DNA-directed RNA polymerase subunit Rpo7 from Saccharolobus solfataricus (strain ATCC 35092 / DSM 1617 / JCM 11322 / P2) (Sulfolobus solfataricus).